An 86-amino-acid chain; its full sequence is Large ribosomal subunit protein bL31 (86 aa).

The interval 65 to 86 (YGMGSANSATSKEQKEEKDSNK) is disordered. Residues 76–86 (KEQKEEKDSNK) are compositionally biased toward basic and acidic residues.

This sequence belongs to the bacterial ribosomal protein bL31 family. Type A subfamily. Part of the 50S ribosomal subunit.

Its function is as follows. Binds the 23S rRNA. The chain is Large ribosomal subunit protein bL31 from Prochlorococcus marinus (strain MIT 9312).